The sequence spans 83 residues: Cardiotoxin 7a (83 aa).

The first 21 residues, 1–21, serve as a signal peptide directing secretion; that stretch reads MKTLLLTLVVVTIVCLDLGYT. 4 disulfides stabilise this stretch: Cys-24–Cys-43, Cys-36–Cys-61, Cys-65–Cys-76, and Cys-77–Cys-82.

It belongs to the three-finger toxin family. Short-chain subfamily. Orphan group XV sub-subfamily. Expressed by the venom gland.

It is found in the secreted. The protein localises to the target cell membrane. Has low cytotoxic activity. In Naja atra (Chinese cobra), this protein is Cardiotoxin 7a.